Reading from the N-terminus, the 335-residue chain is Urokinase plasminogen activator surface receptor (335 aa).

Residues Met1–Gly22 form the signal peptide. 3 UPAR/Ly6 domains span residues Leu23–Tyr114, Leu115–Gly213, and His214–Gly305. 3 cysteine pairs are disulfide-bonded: Cys25–Cys46, Cys28–Cys34, and Cys39–Cys67. A glycan (N-linked (GlcNAc...) asparagine) is linked at Asn74. 11 cysteine pairs are disulfide-bonded: Cys93–Cys98, Cys117–Cys144, Cys120–Cys127, Cys137–Cys169, Cys175–Cys192, Cys193–Cys198, Cys216–Cys244, Cys219–Cys227, Cys237–Cys263, Cys269–Cys287, and Cys288–Cys293. Asn184, Asn194, Asn222, and Asn255 each carry an N-linked (GlcNAc...) asparagine glycan. Gly305 carries GPI-anchor amidated glycine lipidation. Residues Ala306 to Thr335 constitute a propeptide, removed in mature form.

Monomer. Interacts (via the UPAR/Ly6 domains) with SRPX2. Interacts with MRC2. Interacts with FAP (seprase); the interaction occurs at the cell surface of invadopodia membrane. Interacts with SORL1 (via N-terminal ectodomain); this interaction decreases PLAUR internalization. The ternary complex composed of PLAUR-PLAU-SERPINE1 also interacts with SORL1.

Its subcellular location is the cell membrane. It localises to the cell projection. The protein localises to the invadopodium membrane. Acts as a receptor for urokinase plasminogen activator. Plays a role in localizing and promoting plasmin formation. Mediates the proteolysis-independent signal transduction activation effects of U-PA. It is subject to negative-feedback regulation by U-PA which cleaves it into an inactive form. In Chlorocebus aethiops (Green monkey), this protein is Urokinase plasminogen activator surface receptor (PLAUR).